A 211-amino-acid chain; its full sequence is Urease accessory protein UreG (211 aa).

GTP is bound at residue 12-19; sequence GPVGAGKT.

This sequence belongs to the SIMIBI class G3E GTPase family. UreG subfamily. Homodimer. UreD, UreF and UreG form a complex that acts as a GTP-hydrolysis-dependent molecular chaperone, activating the urease apoprotein by helping to assemble the nickel containing metallocenter of UreC. The UreE protein probably delivers the nickel.

It localises to the cytoplasm. Functionally, facilitates the functional incorporation of the urease nickel metallocenter. This process requires GTP hydrolysis, probably effectuated by UreG. The protein is Urease accessory protein UreG of Paracoccus denitrificans (strain Pd 1222).